Here is a 514-residue protein sequence, read N- to C-terminus: Major facilitator superfamily domain-containing protein 4A (514 aa).

5 helical membrane passes run 19-39 (LTYW…GPTL), 53-73 (ISWV…LGGV), 82-102 (LWAL…IPFC), 107-127 (VLAL…TVAN), and 139-159 (AVFL…SPLI). 2 N-linked (GlcNAc...) asparagine glycosylation sites follow: N177 and N203. Transmembrane regions (helical) follow at residues 221–241 (YAFW…LMLL), 307–327 (FFAI…LTGA), 347–367 (VAGY…LLSI), 376–396 (ATMV…LLIF), 400–420 (VVFL…TFPS), 438–458 (VLVT…GSIF), and 466–486 (FLVC…LLLF).

The protein belongs to the major facilitator superfamily.

It is found in the membrane. The polypeptide is Major facilitator superfamily domain-containing protein 4A (MFSD4A) (Pongo abelii (Sumatran orangutan)).